Here is a 304-residue protein sequence, read N- to C-terminus: CD-NTase-associated protein 6 (304 aa).

75 to 80 (GTGKTS) is an ATP binding site.

This sequence belongs to the AAA ATPase family. In terms of assembly, oligomerizes. Homohexamer. Forms a 1:1:6 CdnD:Cap7:Cap6 complex.

Its function is as follows. Regulates complex assembly in a CBASS antivirus system. CBASS (cyclic oligonucleotide-based antiphage signaling system) provides immunity against bacteriophage. The CD-NTase protein synthesizes cyclic nucleotides in response to infection; these serve as specific second messenger signals. The signals activate a diverse range of effectors, leading to bacterial cell death and thus abortive phage infection. A type III-C(AAA) CBASS system. Prevents the CdnD:Cap7:Cap8 complex (also called CdnD:HORMA2:HORMA3) from synthesizing 2',3',3'-cyclic AMP-AMP-AMP (cAAA). Binds and disassembles an active CdnD:Cap7:Cap8 complex, inhibiting the complex's ability to synthesize cyclic nucleotide second messengers. An AAA+-ATPase remodeler, in the absence of foreign threat Cap6 probably maintains the Cap7 protein in an open, inactive state. Once activated (presumably by a bacteriophage protein) Cap7 binds to and activates its cognate CD-NTase (CdnD in this bacteria) to synthesize cAAA, a cyclic nucleotide second messenger. cAAA activates the NucC endonuclease which degrades all DNA in the infected cell, causing cell death and abortive phage infection. In Pseudomonas aeruginosa, this protein is CD-NTase-associated protein 6.